A 483-amino-acid chain; its full sequence is Glutamate--tRNA ligase (483 aa).

A 'HIGH' region motif is present at residues 11 to 21; sequence PSPTGLLHIGN. The 'KMSKS' region signature appears at 255–259; that stretch reads KLSKR. Lys258 is an ATP binding site.

The protein belongs to the class-I aminoacyl-tRNA synthetase family. Glutamate--tRNA ligase type 1 subfamily. In terms of assembly, monomer.

The protein resides in the cytoplasm. The enzyme catalyses tRNA(Glu) + L-glutamate + ATP = L-glutamyl-tRNA(Glu) + AMP + diphosphate. Its function is as follows. Catalyzes the attachment of glutamate to tRNA(Glu) in a two-step reaction: glutamate is first activated by ATP to form Glu-AMP and then transferred to the acceptor end of tRNA(Glu). The sequence is that of Glutamate--tRNA ligase from Lactococcus lactis subsp. cremoris (strain SK11).